We begin with the raw amino-acid sequence, 665 residues long: Adenylate cyclase 1 (665 aa).

Positions 1 to 25 (MLQRSESGFKDIESMQDSNADKPSR) are disordered. Residues 7–24 (SGFKDIESMQDSNADKPS) are compositionally biased toward basic and acidic residues. The next 2 membrane-spanning stretches (helical) occupy residues 33 to 53 (SLLG…LVGL) and 373 to 393 (AVSG…AHLI). The 51-residue stretch at 394-444 (TKSLNQLTDSANRLQDLDFATPIDVSSHVAEISTLNGAMNRARDAIFTFAL) folds into the HAMP domain. In terms of domain architecture, Guanylate cyclase spans 471 to 603 (TAMFTDIYDF…DTVNVASRLE (133 aa)). Asp-476 and Asp-520 together coordinate Mg(2+).

This sequence belongs to the adenylyl cyclase class-3 family. The cofactor is Mg(2+).

The protein resides in the cell membrane. It catalyses the reaction ATP = 3',5'-cyclic AMP + diphosphate. In terms of biological role, plays essential roles in regulation of cellular metabolism by catalyzing the synthesis of a second messenger, cAMP. The protein is Adenylate cyclase 1 (cya1) of Rhizobium meliloti (strain 1021) (Ensifer meliloti).